A 475-amino-acid polypeptide reads, in one-letter code: Ankyrin repeat, SAM and basic leucine zipper domain-containing protein 1 (475 aa).

The interval 1 to 25 is disordered; sequence MAASALRGLPVAGGGESSESEDDGW. 3 positions are modified to phosphoserine: Ser17, Ser18, and Ser20. ANK repeat units follow at residues 45 to 74, 78 to 107, 110 to 144, 148 to 177, 181 to 210, and 214 to 243; these read EKKE…SVDS, YGWT…NASF, DKQS…DPNV, RLMT…EVNT, NGYT…NKML, and DGKM…PLEG. One can recognise an SAM domain in the interval 272–334; it reads SYTAFGDLEV…KILAALKELQ (63 aa).

As to quaternary structure, interacts with DDX4, PIWIL1, RANBP9 and TDRD1. Expressed exclusively in the testis and ovary and at higher levels in the adult testis compared with the adult ovary.

The protein resides in the cytoplasm. Functionally, plays a central role during spermatogenesis by repressing transposable elements and preventing their mobilization, which is essential for the germline integrity. Acts via the piRNA metabolic process, which mediates the repression of transposable elements during meiosis by forming complexes composed of piRNAs and Piwi proteins and governs the methylation and subsequent repression of transposons. Its association with pi-bodies suggests a participation in the primary piRNAs metabolic process. Required prior to the pachytene stage to facilitate the production of multiple types of piRNAs, including those associated with repeats involved in the regulation of retrotransposons. May act by mediating protein-protein interactions during germ cell maturation. The sequence is that of Ankyrin repeat, SAM and basic leucine zipper domain-containing protein 1 from Homo sapiens (Human).